The following is a 94-amino-acid chain: Large ribosomal subunit protein uL23 (94 aa).

Belongs to the universal ribosomal protein uL23 family. As to quaternary structure, part of the 50S ribosomal subunit. Contacts protein L29, and trigger factor when it is bound to the ribosome.

In terms of biological role, one of the early assembly proteins it binds 23S rRNA. One of the proteins that surrounds the polypeptide exit tunnel on the outside of the ribosome. Forms the main docking site for trigger factor binding to the ribosome. This is Large ribosomal subunit protein uL23 from Latilactobacillus sakei subsp. sakei (strain 23K) (Lactobacillus sakei subsp. sakei).